Consider the following 195-residue polypeptide: Probable GTP-binding protein EngB (195 aa).

In terms of domain architecture, EngB-type G spans 24–195 (ELPEIALAGR…EAWDAILEKL (172 aa)). Residues 32–39 (GRSNVGKS), 59–63 (GKTQL), 77–80 (DVPG), 144–147 (TKAD), and 176–178 (FSS) each bind GTP. Residues Ser-39 and Thr-61 each contribute to the Mg(2+) site.

The protein belongs to the TRAFAC class TrmE-Era-EngA-EngB-Septin-like GTPase superfamily. EngB GTPase family. It depends on Mg(2+) as a cofactor.

In terms of biological role, necessary for normal cell division and for the maintenance of normal septation. This is Probable GTP-binding protein EngB from Streptococcus pneumoniae (strain P1031).